The following is a 238-amino-acid chain: NAD(P)H-hydrate epimerase (238 aa).

The 216-residue stretch at alanine 10–leucine 225 folds into the YjeF N-terminal domain. Asparagine 68–aspartate 72 contacts (6S)-NADPHX. Asparagine 69 and aspartate 133 together coordinate K(+). (6S)-NADPHX contacts are provided by residues glycine 137–proline 143 and aspartate 166. Residue serine 169 coordinates K(+).

The protein belongs to the NnrE/AIBP family. K(+) is required as a cofactor.

The catalysed reaction is (6R)-NADHX = (6S)-NADHX. It carries out the reaction (6R)-NADPHX = (6S)-NADPHX. Its function is as follows. Catalyzes the epimerization of the S- and R-forms of NAD(P)HX, a damaged form of NAD(P)H that is a result of enzymatic or heat-dependent hydration. This is a prerequisite for the S-specific NAD(P)H-hydrate dehydratase to allow the repair of both epimers of NAD(P)HX. The polypeptide is NAD(P)H-hydrate epimerase (Drosophila willistoni (Fruit fly)).